Consider the following 435-residue polypeptide: GTPase Obg (435 aa).

An Obg domain is found at 1–158; sequence MFLDTAKVSV…RQLELELKIL (158 aa). The OBG-type G domain maps to 159 to 336; that stretch reads ADVGLVGFPS…LLEATAELLA (178 aa). GTP-binding positions include 165 to 172, 190 to 194, 212 to 215, 282 to 285, and 317 to 319; these read GFPSVGKS, FTTIV, DLPG, NKMD, and SSL. 2 residues coordinate Mg(2+): serine 172 and threonine 192. The region spanning 357 to 435 is the OCT domain; the sequence is GFAAEEKAFE…IGKFEFEFVD (79 aa).

This sequence belongs to the TRAFAC class OBG-HflX-like GTPase superfamily. OBG GTPase family. As to quaternary structure, monomer. Mg(2+) serves as cofactor.

The protein localises to the cytoplasm. Its function is as follows. An essential GTPase which binds GTP, GDP and possibly (p)ppGpp with moderate affinity, with high nucleotide exchange rates and a fairly low GTP hydrolysis rate. Plays a role in control of the cell cycle, stress response, ribosome biogenesis and in those bacteria that undergo differentiation, in morphogenesis control. The sequence is that of GTPase Obg from Streptococcus equi subsp. zooepidemicus (strain MGCS10565).